Reading from the N-terminus, the 256-residue chain is Imidazole glycerol phosphate synthase subunit HisF (256 aa).

Catalysis depends on residues Asp-11 and Asp-130.

Belongs to the HisA/HisF family. As to quaternary structure, heterodimer of HisH and HisF.

Its subcellular location is the cytoplasm. The catalysed reaction is 5-[(5-phospho-1-deoxy-D-ribulos-1-ylimino)methylamino]-1-(5-phospho-beta-D-ribosyl)imidazole-4-carboxamide + L-glutamine = D-erythro-1-(imidazol-4-yl)glycerol 3-phosphate + 5-amino-1-(5-phospho-beta-D-ribosyl)imidazole-4-carboxamide + L-glutamate + H(+). The protein operates within amino-acid biosynthesis; L-histidine biosynthesis; L-histidine from 5-phospho-alpha-D-ribose 1-diphosphate: step 5/9. Functionally, IGPS catalyzes the conversion of PRFAR and glutamine to IGP, AICAR and glutamate. The HisF subunit catalyzes the cyclization activity that produces IGP and AICAR from PRFAR using the ammonia provided by the HisH subunit. This Prochlorococcus marinus (strain AS9601) protein is Imidazole glycerol phosphate synthase subunit HisF.